The sequence spans 220 residues: Putative 3-methyladenine DNA glycosylase (220 aa).

It belongs to the DNA glycosylase MPG family.

This is Putative 3-methyladenine DNA glycosylase from Rickettsia bellii (strain RML369-C).